Reading from the N-terminus, the 354-residue chain is Guanine nucleotide-binding protein G(o) subunit alpha (354 aa).

Gly2 carries N-myristoyl glycine lipidation. Cys3 carries the S-palmitoyl cysteine lipid modification. Positions 32 to 354 (KDIKLLLLGA…ANNLRGCGLY (323 aa)) constitute a G-alpha domain. Residues 35–48 (KLLLLGAGESGKST) form a G1 motif region. GTP-binding positions include 40-47 (GAGESGKS), 176-182 (LRTRVKT), 201-205 (DVGGQ), 270-273 (NKKD), and Ala326. Residues Ser47 and Thr182 each coordinate Mg(2+). Residues 174–182 (DILRTRVKT) are G2 motif. The G3 motif stretch occupies residues 197 to 206 (FKLFDVGGQR). The segment at 266–273 (ILFLNKKD) is G4 motif. Positions 324-329 (TCATDT) are G5 motif.

This sequence belongs to the G-alpha family. G(i/o/t/z) subfamily. As to quaternary structure, g proteins are composed of 3 units; alpha, beta and gamma. The alpha chain contains the guanine nucleotide binding site.

Its function is as follows. Guanine nucleotide-binding proteins (G proteins) are involved as modulators or transducers in various transmembrane signaling systems. The G(o) protein function is not clear. This is Guanine nucleotide-binding protein G(o) subunit alpha from Lymnaea stagnalis (Great pond snail).